A 469-amino-acid chain; its full sequence is D-3-phosphoglycerate dehydrogenase 2 (469 aa).

Ser-2 is subject to N-acetylserine. Phosphoserine occurs at positions 22, 29, and 33. NAD(+) contacts are provided by residues 208–209 (HI), Asp-228, 285–287 (ASR), and Asp-311. Residue Arg-287 is part of the active site. The active site involves Glu-316. The active-site Proton donor is His-347. Residue 347 to 350 (HIGG) participates in NAD(+) binding. One can recognise an ACT domain in the interval 399-469 (RVLYIHRNVP…SAKVSIRLLY (71 aa)).

This sequence belongs to the D-isomer specific 2-hydroxyacid dehydrogenase family.

It carries out the reaction (2R)-3-phosphoglycerate + NAD(+) = 3-phosphooxypyruvate + NADH + H(+). The enzyme catalyses (R)-2-hydroxyglutarate + NAD(+) = 2-oxoglutarate + NADH + H(+). Its pathway is amino-acid biosynthesis; L-serine biosynthesis; L-serine from 3-phospho-D-glycerate: step 1/3. In terms of biological role, catalyzes the reversible oxidation of 3-phospho-D-glycerate to 3-phosphonooxypyruvate, the first step of the phosphorylated L-serine biosynthesis pathway. Also catalyzes the reversible oxidation of 2-hydroxyglutarate to 2-oxoglutarate. This is D-3-phosphoglycerate dehydrogenase 2 (SER33) from Saccharomyces cerevisiae (strain ATCC 204508 / S288c) (Baker's yeast).